The primary structure comprises 309 residues: Glycine--tRNA ligase alpha subunit (309 aa).

It belongs to the class-II aminoacyl-tRNA synthetase family. As to quaternary structure, tetramer of two alpha and two beta subunits.

The protein resides in the cytoplasm. It carries out the reaction tRNA(Gly) + glycine + ATP = glycyl-tRNA(Gly) + AMP + diphosphate. This is Glycine--tRNA ligase alpha subunit from Anaeromyxobacter sp. (strain K).